The chain runs to 123 residues: WAP four-disulfide core domain protein 2 (123 aa).

An N-terminal signal peptide occupies residues 1-26 (MPACRLGLLVASLLLGLLLGLPPVTG). 2 consecutive WAP domains span residues 28-69 (GAEK…VTIC) and 72-122 (PNEK…VTPV). Intrachain disulfides connect cysteine 35–cysteine 61, cysteine 44–cysteine 65, cysteine 48–cysteine 60, cysteine 54–cysteine 69, cysteine 79–cysteine 109, cysteine 92–cysteine 113, cysteine 96–cysteine 108, and cysteine 102–cysteine 118.

In terms of assembly, homotrimer; disulfide-linked. Detected in the distal parts of the epididymis.

It localises to the secreted. Broad range protease inhibitor. The sequence is that of WAP four-disulfide core domain protein 2 (WFDC2) from Sus scrofa (Pig).